Consider the following 431-residue polypeptide: Glutamate-1-semialdehyde 2,1-aminomutase (431 aa).

Lys-269 is subject to N6-(pyridoxal phosphate)lysine.

It belongs to the class-III pyridoxal-phosphate-dependent aminotransferase family. HemL subfamily. In terms of assembly, homodimer. The cofactor is pyridoxal 5'-phosphate.

Its subcellular location is the cytoplasm. The enzyme catalyses (S)-4-amino-5-oxopentanoate = 5-aminolevulinate. Its pathway is porphyrin-containing compound metabolism; protoporphyrin-IX biosynthesis; 5-aminolevulinate from L-glutamyl-tRNA(Glu): step 2/2. This chain is Glutamate-1-semialdehyde 2,1-aminomutase, found in Francisella tularensis subsp. holarctica (strain FTNF002-00 / FTA).